The sequence spans 111 residues: 2Fe-2S ferredoxin (111 aa).

The 2Fe-2S ferredoxin-type domain maps to 1–104; it reads MPKVLFLPHK…DIEVEIPLYN (104 aa). Residues C42, C48, C51, and C87 each contribute to the [2Fe-2S] cluster site.

This sequence belongs to the adrenodoxin/putidaredoxin family. Requires [2Fe-2S] cluster as cofactor.

Functionally, ferredoxin are iron-sulfur proteins that transfer electrons in a wide variety of metabolic reactions. The polypeptide is 2Fe-2S ferredoxin (fdx) (Buchnera aphidicola subsp. Acyrthosiphon pisum (strain APS) (Acyrthosiphon pisum symbiotic bacterium)).